The primary structure comprises 535 residues: MSKHELKDKKRKSVDGEDVSKSKKVKKDKKDKKDKKAKDGNDKVKDKKDKNKKDKSKTDKNLKEVQETEAHTGSETAPVGDSTAAAGYVESKELASVPQADVDTFFSENEVAVEDPESLGFRPLLSFSHLNLHSAIQKEISKFPKPTPIQAVSWPYLLAGKDVIGVAETGSGKTFAFGVPAINSLMSEKSTPRGVKCLVISPTRELASQIYDNLVQLTDKVGLNCCCVYGGVQKDSQREQLKKAQVVVATPGRLLDLIEEGSAKLAGVQYLVLDEADRMLEKGFEEDIKRIIKETKSDVRQTLMFTATWPKEVRELASTFMRAPVKVSIGNRDELSANKRITQVVEVIDPFKKEKRLLELLKQYQSGAKKNDKVLIFALYKKEASRVERNLKYNGYNVAAIHGDLSQQQRTQALSEFKAGTANLLLATDVAARGLDIPNVKTVINLTFPLTVEDYVHRIGRTGRAGATGVAHTLFTEQEKHLAGALVNVLNGAGQPVPEELMKFGTHTKRKEHNAYGAFYKNVDLTKKAKKITFD.

The span at 1–21 (MSKHELKDKKRKSVDGEDVSK) shows a compositional bias: basic and acidic residues. A disordered region spans residues 1–82 (MSKHELKDKK…GSETAPVGDS (82 aa)). The segment covering 22–33 (SKKVKKDKKDKK) has biased composition (basic residues). A compositionally biased stretch (basic and acidic residues) spans 34-72 (DKKAKDGNDKVKDKKDKNKKDKSKTDKNLKEVQETEAHT). The short motif at 125–151 (LSFSHLNLHSAIQKEISKFPKPTPIQA) is the Q motif element. Residues 154-327 (WPYLLAGKDV…STFMRAPVKV (174 aa)) enclose the Helicase ATP-binding domain. 167–174 (AETGSGKT) contributes to the ATP binding site. Positions 274–277 (DEAD) match the DEAD box motif. The region spanning 352 to 505 (KKEKRLLELL…PVPEELMKFG (154 aa)) is the Helicase C-terminal domain.

The protein belongs to the DEAD box helicase family. DDX5/DBP2 subfamily.

The protein localises to the nucleus. Its subcellular location is the nucleolus. The catalysed reaction is ATP + H2O = ADP + phosphate + H(+). Its function is as follows. ATP-dependent RNA helicase required for 60S ribosomal subunit synthesis. Involved in efficient pre-rRNA processing, predominantly at site A3, which is necessary for the normal formation of 25S and 5.8S rRNAs. This is ATP-dependent RNA helicase DBP3 (DBP3) from Eremothecium gossypii (strain ATCC 10895 / CBS 109.51 / FGSC 9923 / NRRL Y-1056) (Yeast).